The following is a 743-amino-acid chain: ABC-type transporter claG (743 aa).

Residues N4 and N30 are each glycosylated (N-linked (GlcNAc...) asparagine). The chain crosses the membrane as a helical span at residues 124–144 (SILLDIFLVIVVSWPFPFAWI). N159 carries an N-linked (GlcNAc...) asparagine glycan. Residues 200–439 (VEFSGISMRP…FQDAGYTFPL (240 aa)) form the ABC transporter domain. ATP is bound at residue 234–241 (GPSGSGKS). Helical transmembrane passes span 507–527 (YPSF…IGLS), 560–580 (GMLL…KTFG), 611–631 (IFLS…PIVS), 636–656 (LIVN…ISAI), and 661–681 (NGPL…GCAP).

The protein belongs to the ABC transporter superfamily. ABCG family.

The protein localises to the membrane. Its function is as follows. ABC-type transporter; part of the cla gene cluster that produces clavatol and ortho-quinone methide. The clavatol biosynthesis cluster cla and the terrestric acid cluster tra are both involved in the production of peniphenones and penilactones. In Penicillium crustosum (Blue mold fungus), this protein is ABC-type transporter claG.